The chain runs to 320 residues: HPr kinase/phosphorylase (320 aa).

Residues His-141 and Lys-162 contribute to the active site. 156–163 contributes to the ATP binding site; sequence GHSGLGKS. Ser-163 is a Mg(2+) binding site. Asp-180 acts as the Proton acceptor; for phosphorylation activity. Proton donor; for dephosphorylation activity in catalysis. An important for the catalytic mechanism of both phosphorylation and dephosphorylation region spans residues 204 to 213; the sequence is LEVRGLGILN. Glu-205 serves as a coordination point for Mg(2+). Arg-248 is an active-site residue. The tract at residues 269–274 is important for the catalytic mechanism of dephosphorylation; that stretch reads PVAVGR.

The protein belongs to the HPrK/P family. As to quaternary structure, homohexamer. The cofactor is Mg(2+).

It catalyses the reaction [HPr protein]-L-serine + ATP = [HPr protein]-O-phospho-L-serine + ADP + H(+). It carries out the reaction [HPr protein]-O-phospho-L-serine + phosphate + H(+) = [HPr protein]-L-serine + diphosphate. In terms of biological role, catalyzes the ATP- as well as the pyrophosphate-dependent phosphorylation of a specific serine residue in HPr, a phosphocarrier protein of the phosphoenolpyruvate-dependent sugar phosphotransferase system (PTS). HprK/P also catalyzes the pyrophosphate-producing, inorganic phosphate-dependent dephosphorylation (phosphorolysis) of seryl-phosphorylated HPr (P-Ser-HPr). The sequence is that of HPr kinase/phosphorylase from Neisseria meningitidis serogroup A / serotype 4A (strain DSM 15465 / Z2491).